Reading from the N-terminus, the 23-residue chain is Alyteserin-1d (23 aa).

The residue at position 23 (Asn23) is an Asparagine amide.

In terms of tissue distribution, expressed by the skin glands.

Its subcellular location is the secreted. The protein resides in the target cell membrane. In terms of biological role, antibacterial peptide with amphipathic alpha-helical structure. Shows selective growth inhibitory activity against the Gram-negative bacteria E.coli (MIC=25 uM) Has a weak hemolytic activity against human erythrocytes (LC(50)&gt;100 uM). Is very weakly active against S.aureus (MIC=200 uM). The protein is Alyteserin-1d of Alytes obstetricans (Common midwife toad).